The chain runs to 327 residues: Serine/threonine-protein phosphatase PP2A catalytic subunit (327 aa).

D75, H77, D103, and N135 together coordinate Mn(2+). H136 serves as the catalytic Proton donor. Mn(2+) is bound by residues H185 and H259. Residue L327 is modified to Leucine methyl ester.

Belongs to the PPP phosphatase family. PP-2A subfamily. The cofactor is Mn(2+).

It carries out the reaction O-phospho-L-seryl-[protein] + H2O = L-seryl-[protein] + phosphate. The enzyme catalyses O-phospho-L-threonyl-[protein] + H2O = L-threonyl-[protein] + phosphate. The polypeptide is Serine/threonine-protein phosphatase PP2A catalytic subunit (pph-1) (Neurospora crassa (strain ATCC 24698 / 74-OR23-1A / CBS 708.71 / DSM 1257 / FGSC 987)).